The sequence spans 398 residues: Succinate--CoA ligase [ADP-forming] subunit beta (398 aa).

In terms of domain architecture, ATP-grasp spans 9–254 (KRLLHEYGAP…TSEEDPKEIE (246 aa)). ATP contacts are provided by residues Lys-46, 53-55 (GRG), Glu-109, Ala-112, and Glu-117. The Mg(2+) site is built by Asn-209 and Asp-223. Substrate-binding positions include Asn-274 and 331-333 (GIM).

It belongs to the succinate/malate CoA ligase beta subunit family. As to quaternary structure, heterotetramer of two alpha and two beta subunits. Requires Mg(2+) as cofactor.

The catalysed reaction is succinate + ATP + CoA = succinyl-CoA + ADP + phosphate. It carries out the reaction GTP + succinate + CoA = succinyl-CoA + GDP + phosphate. The protein operates within carbohydrate metabolism; tricarboxylic acid cycle; succinate from succinyl-CoA (ligase route): step 1/1. In terms of biological role, succinyl-CoA synthetase functions in the citric acid cycle (TCA), coupling the hydrolysis of succinyl-CoA to the synthesis of either ATP or GTP and thus represents the only step of substrate-level phosphorylation in the TCA. The beta subunit provides nucleotide specificity of the enzyme and binds the substrate succinate, while the binding sites for coenzyme A and phosphate are found in the alpha subunit. The sequence is that of Succinate--CoA ligase [ADP-forming] subunit beta from Bartonella henselae (strain ATCC 49882 / DSM 28221 / CCUG 30454 / Houston 1) (Rochalimaea henselae).